The primary structure comprises 636 residues: Threonine--tRNA ligase (636 aa).

The TGS domain occupies 1-61 (MLKITLKDGS…NENCEVEILS (61 aa)). The catalytic stretch occupies residues 244 to 534 (EHRKLGKELD…LIEHYEGKFP (291 aa)). The Zn(2+) site is built by cysteine 335, histidine 386, and histidine 511.

The protein belongs to the class-II aminoacyl-tRNA synthetase family. In terms of assembly, homodimer. Requires Zn(2+) as cofactor.

The protein localises to the cytoplasm. The enzyme catalyses tRNA(Thr) + L-threonine + ATP = L-threonyl-tRNA(Thr) + AMP + diphosphate + H(+). In terms of biological role, catalyzes the attachment of threonine to tRNA(Thr) in a two-step reaction: L-threonine is first activated by ATP to form Thr-AMP and then transferred to the acceptor end of tRNA(Thr). Also edits incorrectly charged L-seryl-tRNA(Thr). The chain is Threonine--tRNA ligase from Natranaerobius thermophilus (strain ATCC BAA-1301 / DSM 18059 / JW/NM-WN-LF).